A 477-amino-acid polypeptide reads, in one-letter code: Homeobox protein Meis2 (477 aa).

A required for interaction with PBX1 region spans residues 71–191; that stretch reads DALKRDKDAI…KMPIDLVIDE (121 aa). One can recognise an MEIS N-terminal domain in the interval 110–193; the sequence is GGDVCSSDSF…PIDLVIDERD (84 aa). Residues 193-203 show a composition bias toward basic and acidic residues; the sequence is DGSSKSDHEEL. Positions 193-283 are disordered; the sequence is DGSSKSDHEE…KKRQKKRGIF (91 aa). Composition is skewed to polar residues over residues 204–217 and 239–251; these read SGSSTNLADHNPSS and GHASQSGDNSSEQ. The homeobox; TALE-type DNA-binding region spans 276–338; that stretch reads RQKKRGIFPK…NARRRIVQPM (63 aa). Residues 299-333 are interaction with DNA; the sequence is LTHPYPSEEQKKQLAQDTGLTILQVNNWFINARRR. The interval 340 to 477 is transcriptional activation domain; sequence DQSNRAGFLL…GGQVMDIHAQ (138 aa).

This sequence belongs to the TALE/MEIS homeobox family. In terms of assembly, monomer and homodimer. Heterodimer with HOXB13. Isoform 2 interacts with TLX1. Isoform 3 interacts with HOXA13 and PBX1 isoform PBX1b. Isoform 4 interacts with SP1, SP3 and KLF4. Isoform 4 and isoform 5 interact with PBX1 isoform PBX1a; the interaction partially relieves MEIS2 autoinhibition. Isoform 3 also known as MEIS2b is part of a PDX1:PBX1b:Meis2B complex; Meis2B is recruited by PBX1b and can be replaced by isoform 4 in a small fraction of complexes. Can form trimeric complexes including HOXB8 and PBX2 or PBX3. In terms of tissue distribution, expressed in various tissues. Expressed at high level in the lymphoid organs of hematopoietic tissues. Also expressed in some regions of the brain, such as the putamen.

The protein localises to the nucleus. Its subcellular location is the cytoplasm. It is found in the perinuclear region. In terms of biological role, involved in transcriptional regulation. Binds to HOX or PBX proteins to form dimers, or to a DNA-bound dimer of PBX and HOX proteins and thought to have a role in stabilization of the homeoprotein-DNA complex. Isoform 3 is required for the activity of a PDX1:PBX1b:MEIS2b complex in pancreatic acinar cells involved in the transcriptional activation of the ELA1 enhancer; the complex binds to the enhancer B element and cooperates with the transcription factor 1 complex (PTF1) bound to the enhancer A element; MEIS2 is not involved in complex DNA-binding. Probably in complex with PBX1, is involved in transcriptional regulation by KLF4. Isoform 3 and isoform 4 can bind to a EPHA8 promoter sequence containing the DNA motif 5'-CGGTCA-3'; in cooperation with a PBX protein (such as PBX2) is proposed to be involved in the transcriptional activation of EPHA8 in the developing midbrain. May be involved in regulation of myeloid differentiation. Can bind to the DNA sequence 5'-TGACAG-3'in the activator ACT sequence of the D(1A) dopamine receptor (DRD1) promoter and activate DRD1 transcription; isoform 5 cannot activate DRD1 transcription. In Homo sapiens (Human), this protein is Homeobox protein Meis2 (MEIS2).